A 253-amino-acid polypeptide reads, in one-letter code: Triosephosphate isomerase (253 aa).

9–11 is a substrate binding site; the sequence is NWK. The active-site Electrophile is histidine 94. Residue glutamate 163 is the Proton acceptor of the active site. Substrate is bound by residues glycine 169, serine 209, and 230–231; that span reads GG.

This sequence belongs to the triosephosphate isomerase family. Homodimer.

The protein localises to the cytoplasm. It catalyses the reaction D-glyceraldehyde 3-phosphate = dihydroxyacetone phosphate. The protein operates within carbohydrate biosynthesis; gluconeogenesis. It participates in carbohydrate degradation; glycolysis; D-glyceraldehyde 3-phosphate from glycerone phosphate: step 1/1. Its function is as follows. Involved in the gluconeogenesis. Catalyzes stereospecifically the conversion of dihydroxyacetone phosphate (DHAP) to D-glyceraldehyde-3-phosphate (G3P). The protein is Triosephosphate isomerase of Dehalococcoides mccartyi (strain ATCC BAA-2100 / JCM 16839 / KCTC 5957 / BAV1).